Consider the following 75-residue polypeptide: uncharacterized protein (75 aa).

Residues 1 to 25 (MSLFYRAVALGTLSALVWYSTSILA) form the signal peptide. A helical membrane pass occupies residues 55 to 75 (YRALLAFSLVICGTLLVTCVI).

It localises to the host endoplasmic reticulum membrane. Its function is as follows. Plays a role in the down-regulation of the host NKG2D ligand MICA by targeting ER-resident MICA to proteasomal degradation prior to the GPI-anchoring step. In turn, MICA reduction diminishes NK-cell killing of HCMV-infected cells. This is an uncharacterized protein from Homo sapiens (Human).